The chain runs to 1966 residues: Dedicator of cytokinesis protein 4 (1966 aa).

The SH3 domain occupies 6 to 67 (EHEKYGVVIA…PSSYVHLKNA (62 aa)). Y167 carries the phosphotyrosine modification. T193 carries the post-translational modification Phosphothreonine. The region spanning 401–574 (RNDLYITIER…ESFCITSFLC (174 aa)) is the C2 DOCK-type domain. In terms of domain architecture, DOCKER spans 1190 to 1596 (KTELNKEEMY…LGIQEFSACM (407 aa)). S1599, S1607, S1614, S1618, S1620, and S1631 each carry phosphoserine. Disordered stretches follow at residues 1648 to 1729 (SQAS…IYPT) and 1742 to 1966 (IGDG…VSQL). Over residues 1672–1703 (PSPSTSSLSSTHSASPNVTSSAPSSARASPLL) the composition is skewed to low complexity. S1769 carries the phosphoserine modification. Residues 1788 to 1794 (PPVPPRP) carry the SH3-binding motif. The segment covering 1795 to 1809 (TQTASPARHTTSVSP) has biased composition (polar residues). Positions 1838–1863 (SNSPVLSGSYSSGISSLSRCSTSETS) are enriched in low complexity. Positions 1864–1873 (GFENQVNEQS) are enriched in polar residues. Basic and acidic residues predominate over residues 1941–1954 (SHLENGARRTDPGP).

This sequence belongs to the DOCK family. Interacts with nucleotide-free Rap1; functions as a guanine nucleotide exchange factor (GEF) for Rap1. Interacts (via DOCKER domain) with RAC1; functions as a guanine nucleotide exchange factor (GEF) for RAC1. Interacts with the SH3 domain of CRK. Interacts with FASLG. Interacts with ELMO2 and EPHA2; mediates activation of RAC1 by EPHA2. Interacts with USH1C (via PDZ 1 domain). Widely expressed at low level. Highly expressed in skeletal muscle, prostate and ovary. As to expression, may be specifically expressed in the brain and eye.

It localises to the cell membrane. Its subcellular location is the cell projection. It is found in the cytoplasm. The protein localises to the cytosol. Its function is as follows. Functions as a guanine nucleotide exchange factor (GEF) that promotes the exchange of GDP to GTP, converting inactive GDP-bound small GTPases into their active GTP-bound form. Involved in regulation of adherens junction between cells. Plays a role in cell migration. Functionally, has a higher guanine nucleotide exchange factor activity compared to other isoforms. This Homo sapiens (Human) protein is Dedicator of cytokinesis protein 4 (DOCK4).